The sequence spans 1405 residues: DNA-directed RNA polymerase subunit beta' (1405 aa).

Zn(2+) contacts are provided by cysteine 70, cysteine 72, cysteine 85, and cysteine 88. Mg(2+) contacts are provided by aspartate 458, aspartate 460, and aspartate 462. Zn(2+)-binding residues include cysteine 813, cysteine 887, cysteine 894, and cysteine 897.

Belongs to the RNA polymerase beta' chain family. As to quaternary structure, the RNAP catalytic core consists of 2 alpha, 1 beta, 1 beta' and 1 omega subunit. When a sigma factor is associated with the core the holoenzyme is formed, which can initiate transcription. Requires Mg(2+) as cofactor. The cofactor is Zn(2+).

The enzyme catalyses RNA(n) + a ribonucleoside 5'-triphosphate = RNA(n+1) + diphosphate. Its function is as follows. DNA-dependent RNA polymerase catalyzes the transcription of DNA into RNA using the four ribonucleoside triphosphates as substrates. This Albidiferax ferrireducens (strain ATCC BAA-621 / DSM 15236 / T118) (Rhodoferax ferrireducens) protein is DNA-directed RNA polymerase subunit beta'.